The sequence spans 1976 residues: Myosin-10 (1976 aa).

R18 bears the Omega-N-methylarginine mark. In terms of domain architecture, Myosin N-terminal SH3-like spans 31 to 81 (TAKKLVWIPSERHGFEAASIKEERGDEVMVELAENGKKAMVNKDDIQKMNP). Positions 85–783 (SKVEDMAELT…VLAHLEEERD (699 aa)) constitute a Myosin motor domain. 178–185 (GESGAGKT) contacts ATP. Position 214 is a phosphoserine (L214). K442 is modified (N6-acetyllysine). An actin-binding region spans residues 661–683 (LTKLMATLRNTNPNFVRCIIPNH). Residues 786 to 815 (ITDIIIFFQAVCRGYLARKAFAKKQQQLSA) form the IQ domain. The stretch at 845–1976 (LQVTRQEEEL…VNETQPPQSE (1132 aa)) forms a coiled coil. Residues 1127–1147 (FESEKASRNKAEKQKRDLSEE) are disordered. Residues 1129 to 1147 (SEKASRNKAEKQKRDLSEE) show a composition bias toward basic and acidic residues. Position 1145 is a phosphoserine (S1145). N6-acetyllysine is present on residues K1241, K1301, and K1645. Disordered regions lie at residues 1697–1728 (ASSE…SALL) and 1872–1976 (MEKA…PQSE). A compositionally biased stretch (basic and acidic residues) spans 1698 to 1708 (SSERARRHAEQ). R1930 carries the post-translational modification Omega-N-methylarginine. Residues S1935, S1937, S1938, and S1939 each carry the phosphoserine modification. R1940 is modified (omega-N-methylarginine). S1952 and S1956 each carry phosphoserine. A Phosphothreonine modification is found at T1960. The segment covering 1967–1976 (VNETQPPQSE) has biased composition (polar residues). At S1975 the chain carries Phosphoserine.

The protein belongs to the TRAFAC class myosin-kinesin ATPase superfamily. Myosin family. As to quaternary structure, myosin is a hexameric protein that consists of 2 heavy chain subunits (MHC), 2 alkali light chain subunits (MLC) and 2 regulatory light chain subunits (MLC-2). Interacts with PLEKHG6. Interacts with ECPAS. Interacts with KIF26B. Interacts with LARP6. Interacts with MCC. Interacts with CFAP95. (Microbial infection) Interacts with herpes simplex virus 1/HHV-1 envelope glycoprotein B. In terms of processing, phosphorylated by ABL2. In terms of tissue distribution, isoform 1 is expressed in cerebellum and spinal chord. Isoform 2 is expressed in cerebrum and retina. Isoform 3 is expressed in the cerebrum and to a much lower extent in cerebellum.

The protein resides in the cell projection. The protein localises to the lamellipodium. It is found in the cell membrane. Functionally, cellular myosin that appears to play a role in cytokinesis, cell shape, and specialized functions such as secretion and capping. Involved with LARP6 in the stabilization of type I collagen mRNAs for CO1A1 and CO1A2. During cell spreading, plays an important role in cytoskeleton reorganization, focal contacts formation (in the central part but not the margins of spreading cells), and lamellipodial extension; this function is mechanically antagonized by MYH9. (Microbial infection) Acts as a receptor for herpes simplex virus 1/HHV-1 envelope glycoprotein B. This chain is Myosin-10 (MYH10), found in Homo sapiens (Human).